The following is a 218-amino-acid chain: Adenylate kinase (218 aa).

11–16 (GAGKGT) is a binding site for ATP. The NMP stretch occupies residues 31-60 (STGDMFREAMANKTKVGLEAKSYIDKGNLV). Residues Thr-32, Arg-37, 58–60 (NLV), 86–89 (GFPR), and Gln-93 each bind AMP. An LID region spans residues 127–165 (ARYMCKNCGATYNKLSKQPKVEGTCDRCGSHEFYQREDD). ATP is bound at residue Arg-128. Residues Cys-131 and Cys-134 each coordinate Zn(2+). Position 137 to 138 (137 to 138 (TY)) interacts with ATP. Residues Cys-151 and Cys-154 each contribute to the Zn(2+) site. AMP contacts are provided by Arg-162 and Arg-173. Gln-201 is a binding site for ATP.

It belongs to the adenylate kinase family. As to quaternary structure, monomer.

The protein localises to the cytoplasm. The enzyme catalyses AMP + ATP = 2 ADP. It functions in the pathway purine metabolism; AMP biosynthesis via salvage pathway; AMP from ADP: step 1/1. In terms of biological role, catalyzes the reversible transfer of the terminal phosphate group between ATP and AMP. Plays an important role in cellular energy homeostasis and in adenine nucleotide metabolism. This Lactobacillus helveticus (strain DPC 4571) protein is Adenylate kinase.